Here is a 1458-residue protein sequence, read N- to C-terminus: Probable serine/threonine-protein kinase yakA (1458 aa).

The span at 32–76 (NNSLNSNDNTNTTNNNNNNNNNNNNNNNNNNNNNNNNNINNNNNN) shows a compositional bias: low complexity. Positions 32 to 83 (NNSLNSNDNTNTTNNNNNNNNNNNNNNNNNNNNNNNNNINNNNNNGGMVGVN) are disordered. Residues 205 to 548 (YKVLDSLGQG…PMQAKEHPFI (344 aa)) form the Protein kinase domain. Residues 211-219 (LGQGTFGQV) and Lys234 each bind ATP. Catalysis depends on Asp332, which acts as the Proton acceptor. Disordered regions lie at residues 441 to 462 (HRHLGSNSDDNNNNNNNNNGKP) and 545 to 571 (HPFITGQPYNGPFIPDPSKKRHFTYSQ). Over residues 446-459 (SNSDDNNNNNNNNN) the composition is skewed to low complexity. The stretch at 588-643 (NQHQLFQQLQQQQQQQQQQQQQQQQQQQQQQQQQQQQQQHNQFQQQQQQQQQQQQS) forms a coiled coil. Low complexity-rich tracts occupy residues 659–709 (TPYT…SFNF), 791–800 (SWGSDSSSIS), 808–853 (QKQM…NNVN), and 861–870 (DIPSDSFSSS). 2 disordered regions span residues 659 to 714 (TPYT…NESF) and 791 to 874 (SWGS…EGMD). Residues 878–927 (NLYQQQQQQQQQQQQQQQQQQQQQQQQQQQQQQQQQQLQYQQQFQTLQDL) adopt a coiled-coil conformation. Disordered regions lie at residues 930 to 1095 (EGEK…PQMI), 1128 to 1161 (NQQNTPHLTPSNSSTNLLGKSASSPLKNSSGGAI), 1233 to 1347 (DYRP…SYQY), 1375 to 1399 (QQQQYKKDTPSLMMSPPMNGLKTSS), and 1435 to 1458 (QQLQQQQAPPQNRKQVVIGSYRET). Low complexity-rich tracts occupy residues 961-988 (QQTNNTQQQQQQQQQQQQQQQQQQQQQQ), 1016-1042 (QQFQQQQYKQQQKNLHHQQQQQQRFMQ), and 1064-1093 (QPLHQTYIPQQQQQQQQQQQQSQPTPFTPQ). 2 stretches are compositionally biased toward polar residues: residues 1128–1158 (NQQNTPHLTPSNSSTNLLGKSASSPLKNSSG) and 1233–1245 (DYRPQLFNKQSPP). 2 stretches are compositionally biased toward low complexity: residues 1246–1255 (SSYNSNKSFY) and 1264–1279 (NNNNNNSRPTNQNFSN). A compositionally biased stretch (polar residues) spans 1280–1291 (SLLPSQQQNVIF). A compositionally biased stretch (low complexity) spans 1292–1309 (PQNSPPSSYNSSNSLSKS). 2 stretches are compositionally biased toward polar residues: residues 1310–1321 (GGNTVKNNSNTG) and 1331–1344 (QRFNSTNNLLSGGS). Coiled coils occupy residues 1346 to 1383 (QYQQQQQQQQQQQQQQQQQQQQQQQQQQQQQQQYKKDT) and 1409 to 1442 (RYQYQQQQLQQQFQQQQQQQQQQQIQQQLQQQQA).

It belongs to the protein kinase superfamily. CMGC Ser/Thr protein kinase family. MNB/DYRK subfamily.

The protein resides in the cytoplasm. It carries out the reaction L-seryl-[protein] + ATP = O-phospho-L-seryl-[protein] + ADP + H(+). It catalyses the reaction L-threonyl-[protein] + ATP = O-phospho-L-threonyl-[protein] + ADP + H(+). The catalysed reaction is L-tyrosyl-[protein] + ATP = O-phospho-L-tyrosyl-[protein] + ADP + H(+). General sensor of environmental conditions, such as heat stress, effecting changes through pkaC. Essential for survival to nitrosoative and oxidative stresses. Required for cell cycle control, not only at the onset but also during development (aggregation process and postaggregative development). The sequence is that of Probable serine/threonine-protein kinase yakA (yakA) from Dictyostelium discoideum (Social amoeba).